Here is a 424-residue protein sequence, read N- to C-terminus: Interferon regulatory factor 8 (424 aa).

Residues 7 to 114 (GRRLRQWLIE…EPYKVYRIVP (108 aa)) constitute a DNA-binding region (IRF tryptophan pentad repeat).

It belongs to the IRF family. As to quaternary structure, interacts with COPS2. Interacts (via C-terminus) with TRIM21 (via C-terminus). Interacts with the BATF-JUNB heterodimer. Interacts with BATF (via bZIP domain); the interaction is direct. Interacts with SPI1. Ubiquitinated. Ubiquitination by TRIM21 in macrophages, a process that is strongly increased upon interferon gamma stimulation, leds to the enhanced transcriptional activity of target cytokine genes. Ubiquitination leads to its degradation by the proteasome. In terms of processing, sumoylated with SUMO3. Desumoylated by SENP1. As to expression, expressed in bone marrow macrophages (at protein level). Mainly expressed in lymphoid tissues. Predominantly expressed in CD8(+)-expressing dendritic cells.

The protein resides in the nucleus. It localises to the cytoplasm. Functionally, transcription factor that specifically binds to the upstream regulatory region of type I interferon (IFN) and IFN-inducible MHC class I genes (the interferon consensus sequence (ICS)). Can both act as a transcriptional activator or repressor. Plays a negative regulatory role in cells of the immune system. Involved in CD8(+) dendritic cell differentiation by forming a complex with the BATF-JUNB heterodimer in immune cells, leading to recognition of AICE sequence (5'-TGAnTCA/GAAA-3'), an immune-specific regulatory element, followed by cooperative binding of BATF and IRF8 and activation of genes. Required for the development of plasmacytoid dendritic cells (pDCs), which produce most of the type I IFN in response to viral infection. Positively regulates macroautophagy in dendritic cells. Acts as a transcriptional repressor of osteoclast differentiation factors such as NFATC1 and EEIG1. This Mus musculus (Mouse) protein is Interferon regulatory factor 8.